A 164-amino-acid polypeptide reads, in one-letter code: Phosphopantetheine adenylyltransferase (164 aa).

Ser9 is a binding site for substrate. ATP is bound by residues 9 to 10 (SF) and His17. Substrate contacts are provided by Lys41, Leu73, and Lys87. ATP-binding positions include 88–90 (GLR), Glu98, and 123–129 (YSYISSS).

The protein belongs to the bacterial CoaD family. Homohexamer. Mg(2+) is required as a cofactor.

Its subcellular location is the cytoplasm. It carries out the reaction (R)-4'-phosphopantetheine + ATP + H(+) = 3'-dephospho-CoA + diphosphate. It participates in cofactor biosynthesis; coenzyme A biosynthesis; CoA from (R)-pantothenate: step 4/5. Its function is as follows. Reversibly transfers an adenylyl group from ATP to 4'-phosphopantetheine, yielding dephospho-CoA (dPCoA) and pyrophosphate. The chain is Phosphopantetheine adenylyltransferase from Clostridium perfringens (strain 13 / Type A).